Consider the following 264-residue polypeptide: Thymidylate synthase (264 aa).

Arginine 21 serves as a coordination point for dUMP. Histidine 51 contributes to the (6R)-5,10-methylene-5,6,7,8-tetrahydrofolate binding site. DUMP is bound at residue 126-127 (RR). Residue cysteine 146 is the Nucleophile of the active site. DUMP is bound by residues 166 to 169 (RSCD), asparagine 177, and 207 to 209 (HLY). Aspartate 169 provides a ligand contact to (6R)-5,10-methylene-5,6,7,8-tetrahydrofolate. Alanine 263 contacts (6R)-5,10-methylene-5,6,7,8-tetrahydrofolate.

It belongs to the thymidylate synthase family. Bacterial-type ThyA subfamily. In terms of assembly, homodimer.

The protein localises to the cytoplasm. It carries out the reaction dUMP + (6R)-5,10-methylene-5,6,7,8-tetrahydrofolate = 7,8-dihydrofolate + dTMP. It participates in pyrimidine metabolism; dTTP biosynthesis. In terms of biological role, catalyzes the reductive methylation of 2'-deoxyuridine-5'-monophosphate (dUMP) to 2'-deoxythymidine-5'-monophosphate (dTMP) while utilizing 5,10-methylenetetrahydrofolate (mTHF) as the methyl donor and reductant in the reaction, yielding dihydrofolate (DHF) as a by-product. This enzymatic reaction provides an intracellular de novo source of dTMP, an essential precursor for DNA biosynthesis. In Pectobacterium atrosepticum (strain SCRI 1043 / ATCC BAA-672) (Erwinia carotovora subsp. atroseptica), this protein is Thymidylate synthase.